The chain runs to 249 residues: Cyclin-dependent kinase inhibitor 2 (249 aa).

A disordered region spans residues 118-180 (KVCTQAGEDH…MCRRSSTTSA (63 aa)). The segment covering 161–180 (AESNQEAKQQMCRRSSTTSA) has biased composition (polar residues).

Belongs to the CDI family. ICK/KRP subfamily.

The protein is Cyclin-dependent kinase inhibitor 2 (KRP2) of Oryza sativa subsp. japonica (Rice).